The chain runs to 99 residues: Protein AC150 (99 aa).

The region spanning 38–96 (GFSCYNKPIGVNFPHPTRCDAFYMCVGLNQKLELICPEGFEFDPDVKNCVPISDYGCTA) is the Chitin-binding type-2 domain. A disulfide bond links Cys-73 and Cys-86.

The protein localises to the host nucleus. It is found in the virion. Functionally, plays a role in primary oral infection of the host. This is Protein AC150 from Autographa californica nuclear polyhedrosis virus (AcMNPV).